A 258-amino-acid chain; its full sequence is UPF0246 protein VV1_0535 (258 aa).

Belongs to the UPF0246 family.

The sequence is that of UPF0246 protein VV1_0535 from Vibrio vulnificus (strain CMCP6).